A 364-amino-acid polypeptide reads, in one-letter code: tRNA-specific 2-thiouridylase MnmA (364 aa).

ATP contacts are provided by residues 13-20 (GMSGGVDS) and methionine 39. The segment at 99–101 (NPD) is interaction with target base in tRNA. Catalysis depends on cysteine 104, which acts as the Nucleophile. Cysteines 104 and 200 form a disulfide. Glycine 128 is a binding site for ATP. Residues 150–152 (KDQ) form an interaction with tRNA region. The active-site Cysteine persulfide intermediate is the cysteine 200. The interval 310–311 (RY) is interaction with tRNA.

It belongs to the MnmA/TRMU family.

Its subcellular location is the cytoplasm. It carries out the reaction S-sulfanyl-L-cysteinyl-[protein] + uridine(34) in tRNA + AH2 + ATP = 2-thiouridine(34) in tRNA + L-cysteinyl-[protein] + A + AMP + diphosphate + H(+). Its function is as follows. Catalyzes the 2-thiolation of uridine at the wobble position (U34) of tRNA, leading to the formation of s(2)U34. The polypeptide is tRNA-specific 2-thiouridylase MnmA (Alkaliphilus oremlandii (strain OhILAs) (Clostridium oremlandii (strain OhILAs))).